Reading from the N-terminus, the 128-residue chain is uncharacterized protein (128 aa).

This is an uncharacterized protein from Schizosaccharomyces pombe (strain 972 / ATCC 24843) (Fission yeast).